The primary structure comprises 23 residues: Potassium channel toxin alpha-KTx 13.4 (23 aa).

Intrachain disulfides connect cysteine 2–cysteine 15, cysteine 5–cysteine 20, and cysteine 9–cysteine 22. The tract at residues 13–20 is interaction with Ca(2+)-activated K(+) channels; the sequence is GKCINGKC. A Tyrosine amide modification is found at tyrosine 23.

Expressed by the venom gland.

It localises to the secreted. Functionally, blocks the potassium channel Shaker B. This Tityus stigmurus (Brazilian scorpion) protein is Potassium channel toxin alpha-KTx 13.4.